Consider the following 572-residue polypeptide: Sulfite reductase [NADPH] hemoprotein beta-component (572 aa).

Positions 437, 443, 482, and 486 each coordinate [4Fe-4S] cluster. Residue C486 participates in siroheme binding.

The protein belongs to the nitrite and sulfite reductase 4Fe-4S domain family. In terms of assembly, alpha(8)-beta(8). The alpha component is a flavoprotein, the beta component is a hemoprotein. The cofactor is siroheme. [4Fe-4S] cluster is required as a cofactor.

The enzyme catalyses hydrogen sulfide + 3 NADP(+) + 3 H2O = sulfite + 3 NADPH + 4 H(+). It functions in the pathway sulfur metabolism; hydrogen sulfide biosynthesis; hydrogen sulfide from sulfite (NADPH route): step 1/1. Functionally, component of the sulfite reductase complex that catalyzes the 6-electron reduction of sulfite to sulfide. This is one of several activities required for the biosynthesis of L-cysteine from sulfate. In Staphylococcus epidermidis (strain ATCC 12228 / FDA PCI 1200), this protein is Sulfite reductase [NADPH] hemoprotein beta-component.